A 413-amino-acid polypeptide reads, in one-letter code: Probable alpha-amylase 2 (413 aa).

Substrate contacts are provided by residues 74 to 75 and 191 to 196; these read YL and RFDFAR. Residue D193 is the Nucleophile of the active site. Residue E218 is the Proton donor of the active site. Substrate-binding positions include W220, S222, Q239, D246, K280, 286–288, H299, Q305, K386, and W411; that span reads GWW.

It belongs to the glycosyl hydrolase 13 family. Requires Ca(2+) as cofactor. In terms of tissue distribution, expressed in developing siliques.

Its subcellular location is the cytoplasm. The protein localises to the cytosol. The catalysed reaction is Endohydrolysis of (1-&gt;4)-alpha-D-glucosidic linkages in polysaccharides containing three or more (1-&gt;4)-alpha-linked D-glucose units.. Its function is as follows. Probable alpha-amylase that does not seem to be required for breakdown of transitory starch in leaves. This is Probable alpha-amylase 2 (AMY2) from Arabidopsis thaliana (Mouse-ear cress).